The following is a 102-amino-acid chain: Putative peripheral benzodiazepine receptor-related protein (102 aa).

In terms of tissue distribution, ubiquitous.

The protein is Putative peripheral benzodiazepine receptor-related protein (TSPO) of Homo sapiens (Human).